Here is a 106-residue protein sequence, read N- to C-terminus: Gas vesicle protein J (106 aa).

It belongs to the gas vesicle GvpA family.

Its subcellular location is the gas vesicle. Its function is as follows. A minor component of the gas vesicle, might be involved in nucleating gas vesicle formation. Gas vesicles are hollow, gas filled proteinaceous nanostructures found in some microorganisms. It is not clear what function gas vesicles perform in soil bacteria. In Streptomyces sp. (strain CB03234), this protein is Gas vesicle protein J.